Consider the following 286-residue polypeptide: Protein WVD2-like 1 (286 aa).

Residues 31–101 (ETDEEFEVKE…ENKKHIDDED (71 aa)) form a disordered region. Thr-32 is modified (phosphothreonine). A compositionally biased stretch (basic and acidic residues) spans 38–47 (VKECTEEKSL). The stretch at 131-182 (AQRAEKRKEYYQKLEEKNQALEAERNELEQRQKDEQEAALKQLRKNLKFKAK) forms a coiled coil. The disordered stretch occupies residues 186–286 (NFYYEAPPAK…KPVNESSEEA (101 aa)). The segment covering 234–247 (TVSNRNRHSTGTVQ) has biased composition (polar residues).

The protein belongs to the TPX2 family.

It is found in the cytoplasm. The protein localises to the cytoskeleton. Functionally, microtubule-associated protein (MAP) that regulates the orientation of interphase cortical microtubules. Modulates both rotational polarity and anisotropic cell expansion during organ growth. Promotes clockwise root and etiolated hypocotyls coiling, clockwise leaf curling, but left-handed petiole twisting. This is Protein WVD2-like 1 (WDL1) from Arabidopsis thaliana (Mouse-ear cress).